Reading from the N-terminus, the 254-residue chain is UPF0603 protein YdjH (254 aa).

Residues M1–A29 form the signal peptide. Residues I166 to S186 form a helical membrane-spanning segment. Positions V223 to G235 are enriched in basic and acidic residues. A disordered region spans residues V223–F254. A compositionally biased stretch (polar residues) spans G243 to F254.

This sequence belongs to the UPF0603 family.

The protein resides in the cell membrane. This is UPF0603 protein YdjH (ydjH) from Bacillus subtilis (strain 168).